The sequence spans 160 residues: MSNVISVGMADLKTTKAPNILMTAGLGSCIGICVHDPIQKVGGMAHIMLPTAGSAPGGNPAKYADTAMDLLVTEILRLGASKSRLRAKMAGGAQMFSFPGKPPVLKIGDRNAEQVIVELKRLGIPLLVSDVGGSFGRTIHFDVGTGDLKVRTINHGEKVI.

This sequence belongs to the CheD family.

It catalyses the reaction L-glutaminyl-[protein] + H2O = L-glutamyl-[protein] + NH4(+). In terms of biological role, probably deamidates glutamine residues to glutamate on methyl-accepting chemotaxis receptors (MCPs), playing an important role in chemotaxis. This is Probable chemoreceptor glutamine deamidase CheD from Desulfitobacterium hafniense (strain DSM 10664 / DCB-2).